The following is a 756-amino-acid chain: ATP-dependent DNA helicase Hel308 (756 aa).

Residues glutamine 29 and 47–54 (SATASGKT) each bind ATP. Residues 34 to 201 (RAGLLNGENI…WLNAKLVKSD (168 aa)) enclose the Helicase ATP-binding domain. The DEAH box signature appears at 146–149 (DEIH). A Helicase C-terminal domain is found at 233-435 (SLINLTVDTL…PTSLKFHTLS (203 aa)).

It belongs to the helicase family. Hel308 subfamily. In terms of assembly, monomer.

It carries out the reaction Couples ATP hydrolysis with the unwinding of duplex DNA by translocating in the 3'-5' direction.. The catalysed reaction is ATP + H2O = ADP + phosphate + H(+). In terms of biological role, DNA-dependent ATPase and 3'-5' DNA helicase that may be involved in repair of stalled replication forks. In Caldivirga maquilingensis (strain ATCC 700844 / DSM 13496 / JCM 10307 / IC-167), this protein is ATP-dependent DNA helicase Hel308.